Here is a 558-residue protein sequence, read N- to C-terminus: Factor VII-activating protease (558 aa).

Residues 1–23 (MFVRMLVFRVLLLIALVGKSVIG) form the signal peptide. EGF-like domains lie at 71-107 (DDDP…SRCQ), 109-146 (AQNK…PDCS), and 148-186 (VLPA…KFCE). Intrachain disulfides connect Cys-75–Cys-86, Cys-80–Cys-95, Cys-97–Cys-106, Cys-113–Cys-123, Cys-118–Cys-134, Cys-136–Cys-145, Cys-152–Cys-163, Cys-157–Cys-174, Cys-176–Cys-185, Cys-192–Cys-274, Cys-213–Cys-255, Cys-244–Cys-269, Cys-299–Cys-433, Cys-345–Cys-361, Cys-353–Cys-422, Cys-445–Cys-513, Cys-475–Cys-491, and Cys-503–Cys-531. One can recognise a Kringle domain in the interval 191–274 (DCYVGDGYSY…KWEYCDVTVC (84 aa)). The Peptidase S1 domain occupies 312–553 (IYGGFKSTAG…FLNWIKTTMH (242 aa)). Catalysis depends on charge relay system residues His-360 and Asp-409. Residue Ser-507 is the Charge relay system of the active site.

It belongs to the peptidase S1 family. In terms of assembly, heterodimer; disulfide-linked. Heterodimer of a 50 kDa heavy and a 27 kDa light chain linked by a disulfide bond. In terms of processing, proteolytic cleavage at Gly-23 or Met-27 can give rise to the 50 kDa heavy chain (HC) and cleavage at Arg-311 or Lys-317 can give rise to the 27 kDa light chain (LC). The HC can undergo further proteolytic cleavage giving rise to a 26 kDa fragment. The LC can undergo further proteolytic cleavage at Arg-311 leading to a 17-kDa fragment and at Arg-478 leading to a 8-kDa fragment. Liver and kidney.

It is found in the secreted. Functionally, cleaves the alpha-chain at multiple sites and the beta-chain between 'Lys-53' and 'Lys-54' but not the gamma-chain of fibrinogen and therefore does not initiate the formation of the fibrin clot and does not cause the fibrinolysis directly. It does not cleave (activate) prothrombin and plasminogen but converts the inactive single chain urinary plasminogen activator (pro-urokinase) to the active two chain form. Activates coagulation factor VII. May function as a tumor suppressor negatively regulating cell proliferation and cell migration. The protein is Factor VII-activating protease of Mus musculus (Mouse).